The chain runs to 420 residues: UDP-N-acetylglucosamine 1-carboxyvinyltransferase (420 aa).

Residue 22–23 (KN) participates in phosphoenolpyruvate binding. Residue R95 participates in UDP-N-acetyl-alpha-D-glucosamine binding. Catalysis depends on C119, which acts as the Proton donor. Position 119 is a 2-(S-cysteinyl)pyruvic acid O-phosphothioketal (C119). UDP-N-acetyl-alpha-D-glucosamine contacts are provided by residues 124-128 (RPIDQ), D307, and I329.

This sequence belongs to the EPSP synthase family. MurA subfamily.

It is found in the cytoplasm. It carries out the reaction phosphoenolpyruvate + UDP-N-acetyl-alpha-D-glucosamine = UDP-N-acetyl-3-O-(1-carboxyvinyl)-alpha-D-glucosamine + phosphate. It participates in cell wall biogenesis; peptidoglycan biosynthesis. Its function is as follows. Cell wall formation. Adds enolpyruvyl to UDP-N-acetylglucosamine. The sequence is that of UDP-N-acetylglucosamine 1-carboxyvinyltransferase from Myxococcus xanthus (strain DK1622).